The following is a 259-amino-acid chain: NH(3)-dependent NAD(+) synthetase (259 aa).

Glycine 33–serine 40 lines the ATP pocket. Aspartate 39 is a binding site for Mg(2+). Arginine 119 provides a ligand contact to deamido-NAD(+). Threonine 139 contacts ATP. Glutamate 144 serves as a coordination point for Mg(2+). Residues lysine 152 and aspartate 159 each coordinate deamido-NAD(+). 2 residues coordinate ATP: lysine 168 and serine 190. Histidine 249–lysine 250 provides a ligand contact to deamido-NAD(+).

The protein belongs to the NAD synthetase family. Homodimer.

It carries out the reaction deamido-NAD(+) + NH4(+) + ATP = AMP + diphosphate + NAD(+) + H(+). It functions in the pathway cofactor biosynthesis; NAD(+) biosynthesis; NAD(+) from deamido-NAD(+) (ammonia route): step 1/1. Its function is as follows. Catalyzes the ATP-dependent amidation of deamido-NAD to form NAD. Uses ammonia as a nitrogen source. The sequence is that of NH(3)-dependent NAD(+) synthetase from Methanocaldococcus jannaschii (strain ATCC 43067 / DSM 2661 / JAL-1 / JCM 10045 / NBRC 100440) (Methanococcus jannaschii).